Here is a 397-residue protein sequence, read N- to C-terminus: Tryptophan synthase beta chain 1 (397 aa).

Lys94 carries the N6-(pyridoxal phosphate)lysine modification.

It belongs to the TrpB family. Tetramer of two alpha and two beta chains. Pyridoxal 5'-phosphate is required as a cofactor.

It catalyses the reaction (1S,2R)-1-C-(indol-3-yl)glycerol 3-phosphate + L-serine = D-glyceraldehyde 3-phosphate + L-tryptophan + H2O. It participates in amino-acid biosynthesis; L-tryptophan biosynthesis; L-tryptophan from chorismate: step 5/5. In terms of biological role, the beta subunit is responsible for the synthesis of L-tryptophan from indole and L-serine. This Archaeoglobus fulgidus (strain ATCC 49558 / DSM 4304 / JCM 9628 / NBRC 100126 / VC-16) protein is Tryptophan synthase beta chain 1 (trpB1).